The primary structure comprises 224 residues: dTTP/UTP pyrophosphatase (224 aa).

Asp77 functions as the Proton acceptor in the catalytic mechanism.

The protein belongs to the Maf family. YhdE subfamily. A divalent metal cation is required as a cofactor.

Its subcellular location is the cytoplasm. The catalysed reaction is dTTP + H2O = dTMP + diphosphate + H(+). It carries out the reaction UTP + H2O = UMP + diphosphate + H(+). Functionally, nucleoside triphosphate pyrophosphatase that hydrolyzes dTTP and UTP. May have a dual role in cell division arrest and in preventing the incorporation of modified nucleotides into cellular nucleic acids. This is dTTP/UTP pyrophosphatase from Dehalococcoides mccartyi (strain CBDB1).